The chain runs to 447 residues: GA-binding protein subunit beta-2 (447 aa).

ANK repeat units lie at residues 5 to 34 (DLGK…PFTT), 37 to 66 (LGTS…SRDA), 70 to 99 (VDRT…DVNA), 103 to 132 (LKMT…DVHA), and 136 to 166 (FDKS…QVNA). A Phosphoserine modification is found at Ser-253. Residues 345–395 (EESKEGTERELLQQRLQEANRRAQEYRHQLLKKEQEAEQYRLRLEAMARQQ) are a coiled coil. A disordered region spans residues 418 to 447 (REMEERETEVTGAVGTAEPHTGVSMETVST).

Heterotetramer of two alpha and two beta subunits. The C-terminal is necessary for the formation of a heterotetrameric GABP-alpha-2/beta-2 complex, and also facilitates homotypic dimerization. Interacts with ADGRB2.

It is found in the nucleus. Its function is as follows. May function as transcription factor capable of interacting with purine rich repeats (GA repeats). The protein is GA-binding protein subunit beta-2 (GABPB2) of Bos taurus (Bovine).